A 351-amino-acid polypeptide reads, in one-letter code: Histidinol-phosphate aminotransferase (351 aa).

Lys215 is modified (N6-(pyridoxal phosphate)lysine).

This sequence belongs to the class-II pyridoxal-phosphate-dependent aminotransferase family. Histidinol-phosphate aminotransferase subfamily. The cofactor is pyridoxal 5'-phosphate.

The catalysed reaction is L-histidinol phosphate + 2-oxoglutarate = 3-(imidazol-4-yl)-2-oxopropyl phosphate + L-glutamate. It participates in amino-acid biosynthesis; L-histidine biosynthesis; L-histidine from 5-phospho-alpha-D-ribose 1-diphosphate: step 7/9. This Methanocorpusculum labreanum (strain ATCC 43576 / DSM 4855 / Z) protein is Histidinol-phosphate aminotransferase.